A 476-amino-acid polypeptide reads, in one-letter code: Trigger factor (476 aa).

The PPIase FKBP-type domain occupies 174 to 261 (GDIAVVSFKG…LKDLKEKELP (88 aa)). The disordered stretch occupies residues 436–476 (KENTTKTSKTTKNSKTTKATKTTKTTKTTKTSKTQNKKEKK). Low complexity predominate over residues 440–469 (TKTSKTTKNSKTTKATKTTKTTKTTKTSKT).

This sequence belongs to the FKBP-type PPIase family. Tig subfamily.

It localises to the cytoplasm. The catalysed reaction is [protein]-peptidylproline (omega=180) = [protein]-peptidylproline (omega=0). Involved in protein export. Acts as a chaperone by maintaining the newly synthesized protein in an open conformation. Functions as a peptidyl-prolyl cis-trans isomerase. The sequence is that of Trigger factor from Prochlorococcus marinus (strain MIT 9215).